A 391-amino-acid polypeptide reads, in one-letter code: E3 ubiquitin-protein ligase RMND5A (391 aa).

The 33-residue stretch at 114–146 (SQQILSEVMVEHFFRQGMLDVAEELCQEAGLSI) folds into the LisH domain. Residues 153–210 (PFVELNRILEALKVRVLRPALEWAVSNREMLMAQNSSLEFKLHRLYFISLLMGGTVNQ) form the CTLH domain. Residues 336 to 377 (CPILRQQTTDNNPPMKLVCGHIISRDALNKMFNGSKLKCPYC) form an RING-Gid-type zinc finger.

As to quaternary structure, identified in the CTLH complex that contains at least RANBP9, MKLN1, MAEA, RMND5A, GID8 and ARMC8.

It localises to the nucleus. The protein resides in the nucleoplasm. It is found in the cytoplasm. The enzyme catalyses S-ubiquitinyl-[E2 ubiquitin-conjugating enzyme]-L-cysteine + [acceptor protein]-L-lysine = [E2 ubiquitin-conjugating enzyme]-L-cysteine + N(6)-ubiquitinyl-[acceptor protein]-L-lysine.. Functionally, E3 ubiquitin-protein ligase component of the CTLH complex. The sequence is that of E3 ubiquitin-protein ligase RMND5A (rmnd5a) from Xenopus tropicalis (Western clawed frog).